Consider the following 88-residue polypeptide: U18-hexatoxin-Hi1a (88 aa).

Positions 1–17 (MRIYSLLILSFLLLASA) are cleaved as a signal peptide. A propeptide spanning residues 18 to 47 (VLINSAEMPRSEKSLLYSIMQGREDSEEGR) is cleaved from the precursor. 4 disulfides stabilise this stretch: C48-C63, C55-C69, C62-C81, and C71-C79.

Belongs to the neurotoxin 07 (Beta/delta-agtx) family. 02 (aga-3) subfamily. Expressed by the venom gland.

It localises to the secreted. Weak insecticidal toxin with probable ion channel impairing activity. In vivo, induces paralysis when injected into sheep blowflies (L.cuprina). Shows weak toxicity, since it is only toxic at high doses, and flies recover within 24 hours. This is U18-hexatoxin-Hi1a from Hadronyche infensa (Fraser island funnel-web spider).